A 562-amino-acid polypeptide reads, in one-letter code: Protein FAM222B (562 aa).

Composition is skewed to low complexity over residues Q155 to A167 and A183 to P201. Disordered regions lie at residues Q155–A203, L219–S245, and A537–R562.

Belongs to the FAM222 family.

The sequence is that of Protein FAM222B (FAM222B) from Homo sapiens (Human).